A 665-amino-acid chain; its full sequence is Alpha-1,4-glucan:maltose-1-phosphate maltosyltransferase (665 aa).

Alpha-maltose 1-phosphate-binding residues include Lys-255, Gln-315, and Asp-350. Asp-386 serves as the catalytic Nucleophile. Asn-387 contributes to the alpha-maltose 1-phosphate binding site. Glu-415 functions as the Proton donor in the catalytic mechanism. Residue 526–527 (KY) coordinates alpha-maltose 1-phosphate.

Belongs to the glycosyl hydrolase 13 family. GlgE subfamily. Homodimer.

It catalyses the reaction alpha-maltose 1-phosphate + [(1-&gt;4)-alpha-D-glucosyl](n) = [(1-&gt;4)-alpha-D-glucosyl](n+2) + phosphate. Its function is as follows. Maltosyltransferase that uses maltose 1-phosphate (M1P) as the sugar donor to elongate linear or branched alpha-(1-&gt;4)-glucans. Is involved in a branched alpha-glucan biosynthetic pathway from trehalose, together with TreS, Mak and GlgB. In Myxococcus xanthus (strain DK1622), this protein is Alpha-1,4-glucan:maltose-1-phosphate maltosyltransferase.